The sequence spans 248 residues: tRNA (guanine-N(1)-)-methyltransferase (248 aa).

S-adenosyl-L-methionine is bound by residues glycine 113 and 133–138 (IGDFVL).

The protein belongs to the RNA methyltransferase TrmD family. Homodimer.

It localises to the cytoplasm. It carries out the reaction guanosine(37) in tRNA + S-adenosyl-L-methionine = N(1)-methylguanosine(37) in tRNA + S-adenosyl-L-homocysteine + H(+). Its function is as follows. Specifically methylates guanosine-37 in various tRNAs. The chain is tRNA (guanine-N(1)-)-methyltransferase from Dehalococcoides mccartyi (strain ATCC BAA-2100 / JCM 16839 / KCTC 5957 / BAV1).